The chain runs to 241 residues: Neuromodulin (241 aa).

Positions 1–26 (TKQVEKNEDGDQKIEQDGIKPEDKAH) are enriched in basic and acidic residues. Residues 1–241 (TKQVEKNEDG…EESKADQENA (241 aa)) form a disordered region. Residues 25–54 (AHKAATKIQASFRGHITRKKLKGEKKGDAP) form the IQ domain. 2 stretches are compositionally biased toward low complexity: residues 80-95 (APAA…AQQE) and 118-131 (SEQP…PAAS). Basic and acidic residues-rich tracts occupy residues 132–147 (SEEK…REST) and 159–171 (KADE…EPKQ). Low complexity predominate over residues 172–198 (ADVPAADTTATTTPAAEDATAKATAQP). Basic and acidic residues-rich tracts occupy residues 208-220 (TEEK…ETKP) and 232-241 (EESKADQENA).

The protein belongs to the neuromodulin family. In terms of assembly, binds calmodulin with a greater affinity in the absence of Ca(2+) than in its presence. Post-translationally, palmitoylated. Palmitoylation is essential for plasma membrane association.

It is found in the cell membrane. Its subcellular location is the cell projection. The protein localises to the growth cone membrane. It localises to the synapse. The protein resides in the filopodium membrane. Functionally, this protein is associated with nerve growth. It is a major component of the motile 'growth cones' that form the tips of elongating axons. Plays a role in axonal and dendritic filopodia induction. This chain is Neuromodulin (GAP43), found in Serinus canaria (Island canary).